The sequence spans 293 residues: Thiamine-monophosphate kinase (293 aa).

Mg(2+)-binding residues include glutamate 25, valine 39, aspartate 40, aspartate 68, and aspartate 113. Residues 112 to 113 and arginine 136 contribute to the ATP site; that span reads GD. Aspartate 194 is a Mg(2+) binding site. Residue serine 196 participates in ATP binding. Mg(2+) is bound at residue aspartate 197. 2 residues coordinate substrate: glutamate 243 and tryptophan 286.

It belongs to the thiamine-monophosphate kinase family. Homodimer.

The catalysed reaction is thiamine phosphate + ATP = thiamine diphosphate + ADP. The protein operates within cofactor biosynthesis; thiamine diphosphate biosynthesis; thiamine diphosphate from thiamine phosphate: step 1/1. With respect to regulation, is inhibited by AMP; the mode of AMP inhibition is uncompetitive for both TMP and ATP. Its function is as follows. Catalyzes the ATP-dependent phosphorylation of thiamine-monophosphate (TMP) to form thiamine-pyrophosphate (TPP), the active form of vitamin B1. In Pyrobaculum calidifontis (strain DSM 21063 / JCM 11548 / VA1), this protein is Thiamine-monophosphate kinase.